Here is a 181-residue protein sequence, read N- to C-terminus: Transcription factor bHLH167 (181 aa).

Residues 1-22 (MGRAREIGEGNSSSLREQRNLR) are disordered. The 50-residue stretch at 14 to 63 (SLREQRNLREKDRRMRMKHLFSILSSHVSPTRKLPVPHLIDQATSYMIQL) folds into the bHLH domain.

The protein belongs to the bHLH protein family.

The protein resides in the nucleus. This Arabidopsis thaliana (Mouse-ear cress) protein is Transcription factor bHLH167.